Reading from the N-terminus, the 280-residue chain is Uroporphyrinogen-III C-methyltransferase (280 aa).

S-adenosyl-L-homocysteine contacts are provided by residues proline 24, 100–102 (GGD), 130–131 (TA), methionine 184, alanine 213, and alanine 241.

This sequence belongs to the precorrin methyltransferase family. In terms of assembly, homodimer.

The enzyme catalyses uroporphyrinogen III + 2 S-adenosyl-L-methionine = precorrin-2 + 2 S-adenosyl-L-homocysteine + H(+). It carries out the reaction uroporphyrinogen III + S-adenosyl-L-methionine = precorrin-1 + S-adenosyl-L-homocysteine + H(+). The catalysed reaction is precorrin-1 + S-adenosyl-L-methionine = precorrin-2 + S-adenosyl-L-homocysteine. It participates in cofactor biosynthesis; adenosylcobalamin biosynthesis; precorrin-2 from uroporphyrinogen III: step 1/1. Its pathway is porphyrin-containing compound metabolism; siroheme biosynthesis; precorrin-2 from uroporphyrinogen III: step 1/1. S-adenosylhomocysteine is an extremely powerful competitive inhibitor of the uroporphyrinogen III methylation. SUMT exhibits a substrate inhibition phenomenon at uroporphyrinogen III concentrations above 2 uM; this property might play a regulatory role in cobalamin biosynthesis. The enzyme activity is completely insensitive to feedback inhibition by cobalamin and corrinoid intermediates. Its function is as follows. Catalyzes the two successive C-2 and C-7 methylation reactions involved in the conversion of uroporphyrinogen III to precorrin-2 via the intermediate formation of precorrin-1. It is a step in the biosynthesis of both cobalamin (vitamin B12) and siroheme. Neither uroporphyrin III nor the chlorin (factor I) is a substrate of SUMT. The sequence is that of Uroporphyrinogen-III C-methyltransferase from Sinorhizobium sp.